The primary structure comprises 137 residues: Large-conductance mechanosensitive channel (137 aa).

A run of 2 helical transmembrane segments spans residues 10–30 (FAMR…AAFG) and 76–96 (GVFL…FMAI).

It belongs to the MscL family. In terms of assembly, homopentamer.

It localises to the cell inner membrane. Channel that opens in response to stretch forces in the membrane lipid bilayer. May participate in the regulation of osmotic pressure changes within the cell. The polypeptide is Large-conductance mechanosensitive channel (Erwinia tasmaniensis (strain DSM 17950 / CFBP 7177 / CIP 109463 / NCPPB 4357 / Et1/99)).